A 218-amino-acid chain; its full sequence is Esterase FPY3 (218 aa).

Active-site charge relay system residues include serine 95, aspartate 163, and histidine 190.

The protein belongs to the LovG family.

The protein operates within secondary metabolite biosynthesis. Functionally, esterase; part of the gene cluster that mediates the biosynthesis of the gamma-pyrones fusapyrone (FPY) and deoxyfusapyrone (dFPY). FPY is an undecaketide and thus likely synthesized by the polyketide synthase FPY1 from acetyl-CoA functioning as starter unit and the addition of 10 malonyl-CoA extender units by successive Claisen-condensations. Next to this, FPY shares some rare features: C-glycosylated 4-deoxyglucose at C-3, a gem-dimethyl group at C-13, and an alpha-beta to beta-gamma double bond shift at C-20. During FPY biosynthesis mono-C-methyl groups are transferred to the tetra-, penta-, hexa- and heptaketide, while two C-methyl groups are transferred to the nonaketide, suggesting that the CMet domain is programmed to selectively catalyze two successive C-alpha-methylation reactions of the nonaketide, while other alpha-carbons are non- or mono-methylated only. While the origin of the 4'-deoxyglucose moiety remains opaque, its transfer to C-3 is most likely mediated by the C-glycosyltransferase FPY2. Next to this, the hydroxyl group present at C-33 and discriminating between FPY and dFPY, is likely to be installed by the cytochrome P450 monooxygenase FPY7. No putative function can be predicted for the remaining genes FPY3-FPY6. This Fusarium mangiferae (Mango malformation disease fungus) protein is Esterase FPY3.